The chain runs to 176 residues: WASH complex subunit 3 (176 aa).

A coiled-coil region spans residues 47–74 (ETKFVEMERQLQKTEAALIILEAKLASI). Disordered stretches follow at residues 84–123 (ATEA…PESV) and 152–176 (KMQS…GQRE). Residues 104 to 115 (TTEPPTTENPTE) show a composition bias toward low complexity.

It belongs to the CCDC53 family. In terms of assembly, component of the WASH complex.

The protein localises to the early endosome. Its function is as follows. Acts at least in part as component of the WASH complex which may regulate wash nucleation-promoting factor (NPF) activity and is required for its membrane targeting during endosomal sorting. During embryogenesis, not involved in the wash-dependent developmental migration of hemocytes anteriorly from the tail. The polypeptide is WASH complex subunit 3 (Drosophila melanogaster (Fruit fly)).